Consider the following 180-residue polypeptide: Inner membrane-spanning protein YciB (180 aa).

The next 6 helical transmembrane spans lie at 4–24, 25–45, 52–72, 76–96, 118–138, and 150–170; these read LLSE…GGGI, QSAT…CYII, LSII…ISGD, IKIK…TSGI, ITLS…NEIV, and FKVF…LPLL.

Belongs to the YciB family.

It is found in the cell inner membrane. Plays a role in cell envelope biogenesis, maintenance of cell envelope integrity and membrane homeostasis. The sequence is that of Inner membrane-spanning protein YciB from Rickettsia bellii (strain RML369-C).